The chain runs to 233 residues: MSKSTVFTVLLLLLGMAAYSFGWVQAVAEAAAQYVQIFNNDALRLGLLACIAAVLMLPAFLYLHYVTQSVKNMTAAFQKLTQSHQSCCDFQHHRLCSRYAEEVKSLRDRYKNVRQTYVMAAVLCQVIIFGCMFEIVKAVPFRLHTPPIVSTGMALLLILYLLFYMRMYLLKLFQHGTLFKKILACVLTGAGIGWMLSFTISELLFLIILAAIQQIGSFIYKRFSNRGFTSLDL.

The next 5 helical transmembrane spans lie at 4–24 (STVFTVLLLLLGMAAYSFGWV), 46–66 (GLLACIAAVLMLPAFLYLHYV), 116–136 (TYVMAAVLCQVIIFGCMFEIV), 145–165 (TPPIVSTGMALLLILYLLFYM), and 192–212 (IGWMLSFTISELLFLIILAAI).

It is found in the cell membrane. Functionally, involved in the production of the bacteriocin subtilosin. This chain is Antilisterial bacteriocin subtilosin biosynthesis protein AlbG (albG), found in Bacillus subtilis.